A 187-amino-acid chain; its full sequence is Ribose 1,5-bisphosphate phosphokinase PhnN (187 aa).

10-17 lines the ATP pocket; sequence GPSGSGKD.

The protein belongs to the ribose 1,5-bisphosphokinase family.

It catalyses the reaction alpha-D-ribose 1,5-bisphosphate + ATP = 5-phospho-alpha-D-ribose 1-diphosphate + ADP. It participates in metabolic intermediate biosynthesis; 5-phospho-alpha-D-ribose 1-diphosphate biosynthesis; 5-phospho-alpha-D-ribose 1-diphosphate from D-ribose 5-phosphate (route II): step 3/3. Functionally, catalyzes the phosphorylation of ribose 1,5-bisphosphate to 5-phospho-D-ribosyl alpha-1-diphosphate (PRPP). This is Ribose 1,5-bisphosphate phosphokinase PhnN from Klebsiella pneumoniae subsp. pneumoniae (strain ATCC 700721 / MGH 78578).